Consider the following 158-residue polypeptide: Pyruvoyl-dependent arginine decarboxylase (158 aa).

Position 44 is a pyruvic acid (Ser) (serine 44).

This sequence belongs to the PdaD family. Requires pyruvate as cofactor.

It catalyses the reaction L-arginine + H(+) = agmatine + CO2. The chain is Pyruvoyl-dependent arginine decarboxylase from Pyrococcus furiosus (strain ATCC 43587 / DSM 3638 / JCM 8422 / Vc1).